We begin with the raw amino-acid sequence, 360 residues long: DNA replication and repair protein RecF (360 aa).

ATP is bound at residue 30 to 37; it reads GQNGSGKT.

This sequence belongs to the RecF family.

The protein resides in the cytoplasm. In terms of biological role, the RecF protein is involved in DNA metabolism; it is required for DNA replication and normal SOS inducibility. RecF binds preferentially to single-stranded, linear DNA. It also seems to bind ATP. This is DNA replication and repair protein RecF from Shewanella sp. (strain W3-18-1).